Here is a 614-residue protein sequence, read N- to C-terminus: Deoxynucleoside triphosphate triphosphohydrolase SAMHD1 (614 aa).

Over residues 1–13 the composition is skewed to low complexity; that stretch reads MGSPAAGWGAAPA. Positions 1 to 33 are disordered; it reads MGSPAAGWGAAPAKRARREGSAESSCGSPADRD. The SAM domain maps to 37-102; it reads WDTERLCQHL…LACLNQLRQT (66 aa). GTP contacts are provided by Lys-107 and Val-108. Residue Asn-110 coordinates dGTP. Residues Asp-128, Gln-133, and Arg-136 each coordinate GTP. Gln-140, Leu-141, Val-147, and Arg-155 together coordinate dGTP. Gln-140 serves as a coordination point for dATP. Position 140 (Gln-140) interacts with dCTP. DTTP is bound at residue Gln-140. A dATP-binding site is contributed by Arg-155. A dCTP-binding site is contributed by Arg-155. Residue Arg-155 participates in dTTP binding. Residues 155–307 enclose the HD domain; the sequence is RFEHSLGVGY…GIDVDKWDYF (153 aa). Residues His-158, His-197, and Asp-198 each contribute to the Mn(2+) site. The dATP site is built by His-201 and His-206. DCTP is bound by residues His-201 and His-206. Residues His-201 and His-206 each coordinate dTTP. His-224 is a catalytic residue. Residue Asp-302 participates in Mn(2+) binding. Positions 303, 306, 310, 324, 343, 345, 349, 357, 365, 366, 367, and 368 each coordinate dGTP. The dATP site is built by Lys-303, Tyr-306, and Asp-310. DCTP-binding residues include Lys-303, Tyr-306, and Asp-310. Positions 303, 306, and 310 each coordinate dTTP. A dATP-binding site is contributed by Arg-357. Residue Arg-357 participates in dCTP binding. Position 366 (Gln-366) interacts with dATP. Gln-366 contributes to the dCTP binding site. Gln-366 provides a ligand contact to dTTP. GTP contacts are provided by Arg-442, Lys-446, and Lys-515. Lys-515 contacts dGTP.

It belongs to the SAMHD1 family. In terms of assembly, homodimer; in absence of GTP and dNTP. Homotetramer; in GTP- and dNTP-bound form. Interacts with rbbp8/CtIP. The cofactor is Zn(2+).

It is found in the nucleus. It localises to the chromosome. It catalyses the reaction a 2'-deoxyribonucleoside 5'-triphosphate + H2O = a 2'-deoxyribonucleoside + triphosphate + H(+). It carries out the reaction dATP + H2O = 2'-deoxyadenosine + triphosphate + H(+). The enzyme catalyses dCTP + H2O = 2'-deoxycytidine + triphosphate + H(+). The catalysed reaction is dGTP + H2O = 2'-deoxyguanosine + triphosphate + H(+). It catalyses the reaction dTTP + H2O = thymidine + triphosphate + H(+). Its activity is regulated as follows. Allosterically activated and regulated via the combined actions of GTP and dNTPs (dATP, dGTP, dTTP and dCTP): Allosteric site 1 binds GTP, while allosteric site 2 binds dNTP. Allosteric activation promotes the formation of highly active homotetramers. Its function is as follows. Protein that acts both as a host restriction factor involved in defense response to virus and as a regulator of DNA end resection at stalled replication forks. Has deoxynucleoside triphosphate (dNTPase) activity, which is required to restrict infection by viruses: dNTPase activity reduces cellular dNTP levels to levels too low for retroviral reverse transcription to occur, blocking early-stage virus replication in dendritic and other myeloid cells. Functions during S phase at stalled DNA replication forks to promote the resection of gapped or reversed forks: acts by stimulating the exonuclease activity of MRE11, activating the ATR-CHK1 pathway and allowing the forks to restart replication. Its ability to promote degradation of nascent DNA at stalled replication forks is required to prevent induction of type I interferons, thereby preventing chronic inflammation. Ability to promote DNA end resection at stalled replication forks is independent of dNTPase activity. The polypeptide is Deoxynucleoside triphosphate triphosphohydrolase SAMHD1 (Gallus gallus (Chicken)).